The following is a 43-amino-acid chain: Protein PsbN (43 aa).

The chain crosses the membrane as a helical span at residues 5–27 (TLVAISISGLLVSFTGYALYTAF).

Belongs to the PsbN family.

Its subcellular location is the plastid. It localises to the chloroplast thylakoid membrane. Its function is as follows. May play a role in photosystem I and II biogenesis. The polypeptide is Protein PsbN (Coelogyne cristata (Orchid)).